Reading from the N-terminus, the 62-residue chain is uncharacterized protein (62 aa).

This is an uncharacterized protein from Homo sapiens (Human).